Here is a 117-residue protein sequence, read N- to C-terminus: Large ribosomal subunit protein bL20 (117 aa).

It belongs to the bacterial ribosomal protein bL20 family.

Binds directly to 23S ribosomal RNA and is necessary for the in vitro assembly process of the 50S ribosomal subunit. It is not involved in the protein synthesizing functions of that subunit. The sequence is that of Large ribosomal subunit protein bL20 from Oleidesulfovibrio alaskensis (strain ATCC BAA-1058 / DSM 17464 / G20) (Desulfovibrio alaskensis).